Here is a 40-residue protein sequence, read N- to C-terminus: Photosystem II reaction center protein J (40 aa).

The helical transmembrane segment at 8–28 threads the bilayer; it reads IPLWLVGTVTGTLVIGLMGIF.

The protein belongs to the PsbJ family. In terms of assembly, PSII is composed of 1 copy each of membrane proteins PsbA, PsbB, PsbC, PsbD, PsbE, PsbF, PsbH, PsbI, PsbJ, PsbK, PsbL, PsbM, PsbT, PsbX, PsbY, PsbZ, Psb30/Ycf12, at least 3 peripheral proteins of the oxygen-evolving complex and a large number of cofactors. It forms dimeric complexes.

It is found in the plastid. It localises to the chloroplast thylakoid membrane. One of the components of the core complex of photosystem II (PSII). PSII is a light-driven water:plastoquinone oxidoreductase that uses light energy to abstract electrons from H(2)O, generating O(2) and a proton gradient subsequently used for ATP formation. It consists of a core antenna complex that captures photons, and an electron transfer chain that converts photonic excitation into a charge separation. In Psilotum nudum (Whisk fern), this protein is Photosystem II reaction center protein J.